The sequence spans 150 residues: Cdc42 effector protein 5 (150 aa).

Disordered regions lie at residues 1 to 20 (MPVMKQLGPAQPKKRLDRGA), 34 to 89 (LHVG…PADP), and 114 to 133 (SETTATKPDGDAHPRVQHPK). Residues 23–37 (ISAPLGDFRHTLHVG) form the CRIB domain. Arg38 is modified (omega-N-methylarginine). 2 stretches are compositionally biased toward pro residues: residues 55–66 (GPPPEPGAPPVV) and 74–87 (PAAPQPPVAVPSPA). Over residues 114-127 (SETTATKPDGDAHP) the composition is skewed to basic and acidic residues.

This sequence belongs to the BORG/CEP family. In terms of assembly, interacts with CDC42 in a GTP-dependent manner, and with SEPT7. Highly expressed in the skeletal muscle.

The protein resides in the endomembrane system. Its subcellular location is the cytoplasm. It localises to the cytoskeleton. Its function is as follows. Probably involved in the organization of the actin cytoskeleton. May act downstream of CDC42 to induce actin filament assembly leading to cell shape changes. Induces pseudopodia formation in fibroblasts. Inhibits MAPK8 independently of CDC42 binding. Controls septin organization and this effect is negatively regulated by CDC42. This is Cdc42 effector protein 5 (Cdc42ep5) from Mus musculus (Mouse).